Reading from the N-terminus, the 464-residue chain is Vitamin D3 hydroxylase-associated protein (464 aa).

Catalysis depends on charge relay system residues K150 and S225. The active-site Acyl-ester intermediate is S249.

The protein belongs to the amidase family. As to expression, kidney.

The protein resides in the mitochondrion inner membrane. May have a vitamin D3 hydroxylase regulatory function. This is Vitamin D3 hydroxylase-associated protein from Gallus gallus (Chicken).